The sequence spans 148 residues: Male-specific protein scotti (148 aa).

A disordered region spans residues 56-78 (PQEPPLGVFPAQGGPNGPPRLRK). A glycan (N-linked (GlcNAc...) asparagine) is linked at N129.

Belongs to the male-specific scotti family.

In terms of biological role, post-meiotically transcribed gene that has a role in late spermiogenesis; required for actin cone progression during spermatid individualization. This Drosophila sechellia (Fruit fly) protein is Male-specific protein scotti.